Reading from the N-terminus, the 465-residue chain is Probable dipeptidase A (465 aa).

C3 is an active-site residue.

Belongs to the peptidase C69 family.

It catalyses the reaction an L-aminoacyl-L-amino acid + H2O = 2 an L-alpha-amino acid. In Streptococcus pyogenes serotype M3 (strain SSI-1), this protein is Probable dipeptidase A (pepDA).